We begin with the raw amino-acid sequence, 95 residues long: Large ribosomal subunit protein uL23 (95 aa).

Belongs to the universal ribosomal protein uL23 family. Part of the 50S ribosomal subunit. Contacts protein L29, and trigger factor when it is bound to the ribosome.

In terms of biological role, one of the early assembly proteins it binds 23S rRNA. One of the proteins that surrounds the polypeptide exit tunnel on the outside of the ribosome. Forms the main docking site for trigger factor binding to the ribosome. This chain is Large ribosomal subunit protein uL23, found in Coxiella burnetii (strain CbuK_Q154) (Coxiella burnetii (strain Q154)).